The chain runs to 304 residues: Putative S-adenosyl-L-methionine-dependent methyltransferase MAP_3385 (304 aa).

S-adenosyl-L-methionine contacts are provided by residues aspartate 129 and 158–159; that span reads DL.

This sequence belongs to the UPF0677 family.

Functionally, exhibits S-adenosyl-L-methionine-dependent methyltransferase activity. The polypeptide is Putative S-adenosyl-L-methionine-dependent methyltransferase MAP_3385 (Mycolicibacterium paratuberculosis (strain ATCC BAA-968 / K-10) (Mycobacterium paratuberculosis)).